Here is a 272-residue protein sequence, read N- to C-terminus: GPN-loop GTPase 3 (272 aa).

A GTP-binding site is contributed by 13–18 (GAGKST). Residues 70 to 72 (GPN) carry the Gly-Pro-Asn (GPN)-loop; involved in dimer interface motif. 173 to 176 (SKLD) contributes to the GTP binding site.

This sequence belongs to the GPN-loop GTPase family. As to quaternary structure, heterodimers with NPA3/GPN1 or GPN2. Binds to RNA polymerase II (RNAPII).

Small GTPase required for proper nuclear localization of RNA polymerase II and III (RNAPII and RNAPIII). May act at an RNAP assembly step prior to nuclear import. Promotes sister chromatid separation during anaphase. This Saccharomyces cerevisiae (strain ATCC 204508 / S288c) (Baker's yeast) protein is GPN-loop GTPase 3.